Here is a 265-residue protein sequence, read N- to C-terminus: Shikimate dehydrogenase (NADP(+)) (265 aa).

Residues 14–16 (SLS) and Thr61 each bind shikimate. The active-site Proton acceptor is Lys65. Asn85 and Asp100 together coordinate shikimate. Residues 123 to 127 (GAGGA), 146 to 151 (NRTESK), and Ala209 each bind NADP(+). Shikimate is bound at residue Tyr211. Residue Gly232 participates in NADP(+) binding.

The protein belongs to the shikimate dehydrogenase family. In terms of assembly, homodimer.

It carries out the reaction shikimate + NADP(+) = 3-dehydroshikimate + NADPH + H(+). It functions in the pathway metabolic intermediate biosynthesis; chorismate biosynthesis; chorismate from D-erythrose 4-phosphate and phosphoenolpyruvate: step 4/7. Its function is as follows. Involved in the biosynthesis of the chorismate, which leads to the biosynthesis of aromatic amino acids. Catalyzes the reversible NADPH linked reduction of 3-dehydroshikimate (DHSA) to yield shikimate (SA). The polypeptide is Shikimate dehydrogenase (NADP(+)) (Haloarcula marismortui (strain ATCC 43049 / DSM 3752 / JCM 8966 / VKM B-1809) (Halobacterium marismortui)).